Reading from the N-terminus, the 472-residue chain is D-inositol 3-phosphate glycosyltransferase (472 aa).

H48 is a 1D-myo-inositol 3-phosphate binding site. UDP-N-acetyl-alpha-D-glucosamine contacts are provided by residues 54–55 (QP) and G62. 1D-myo-inositol 3-phosphate-binding positions include 59-64 (DAGGMN), K117, Y150, T174, and R194. Positions 282, 287, and 348 each coordinate UDP-N-acetyl-alpha-D-glucosamine. Residues F357, R358, and A360 each coordinate Mg(2+). Residues E370 and E378 each contribute to the UDP-N-acetyl-alpha-D-glucosamine site. A Mg(2+)-binding site is contributed by T384.

The protein belongs to the glycosyltransferase group 1 family. MshA subfamily. In terms of assembly, homodimer.

It catalyses the reaction 1D-myo-inositol 3-phosphate + UDP-N-acetyl-alpha-D-glucosamine = 1D-myo-inositol 2-acetamido-2-deoxy-alpha-D-glucopyranoside 3-phosphate + UDP + H(+). In terms of biological role, catalyzes the transfer of a N-acetyl-glucosamine moiety to 1D-myo-inositol 3-phosphate to produce 1D-myo-inositol 2-acetamido-2-deoxy-glucopyranoside 3-phosphate in the mycothiol biosynthesis pathway. In Streptomyces griseus subsp. griseus (strain JCM 4626 / CBS 651.72 / NBRC 13350 / KCC S-0626 / ISP 5235), this protein is D-inositol 3-phosphate glycosyltransferase.